A 325-amino-acid chain; its full sequence is Small ribosomal subunit protein uS3 (325 aa).

Residues 38 to 106 (IRKMMSKGME…QVQLNILEVK (69 aa)) enclose the KH type-2 domain. The interval 217-325 (EALLRQQRRE…AQGAPEKAEG (109 aa)) is disordered. Residues 222–232 (QQRRERPRRGP) are compositionally biased toward basic residues. Positions 285 to 316 (TESAAVEGTPVETPAVTPETTAAPAAVTTAEA) are enriched in low complexity.

Belongs to the universal ribosomal protein uS3 family. In terms of assembly, part of the 30S ribosomal subunit. Forms a tight complex with proteins S10 and S14.

In terms of biological role, binds the lower part of the 30S subunit head. Binds mRNA in the 70S ribosome, positioning it for translation. The sequence is that of Small ribosomal subunit protein uS3 from Parafrankia sp. (strain EAN1pec).